The following is a 138-amino-acid chain: MFDIGATELLVIAIVAILVIGPKDMPLALRTAGRWIGKIRQVSSHFRTGLDAMIREAEIEEMDKKWRERNAEIMAKHPADQMQPLDAPDPALSAAEARAAHTEAAKPARAAEETQADRASADEHPAASEPRLPLEGRD.

Residues 1–21 (MFDIGATELLVIAIVAILVIG) form a helical membrane-spanning segment. Residues 74–138 (MAKHPADQMQ…EPRLPLEGRD (65 aa)) form a disordered region. Low complexity predominate over residues 83–97 (QPLDAPDPALSAAEA). The segment covering 98–138 (RAAHTEAAKPARAAEETQADRASADEHPAASEPRLPLEGRD) has biased composition (basic and acidic residues).

The protein belongs to the TatB family. In terms of assembly, the Tat system comprises two distinct complexes: a TatABC complex, containing multiple copies of TatA, TatB and TatC subunits, and a separate TatA complex, containing only TatA subunits. Substrates initially bind to the TatABC complex, which probably triggers association of the separate TatA complex to form the active translocon.

Its subcellular location is the cell inner membrane. Its function is as follows. Part of the twin-arginine translocation (Tat) system that transports large folded proteins containing a characteristic twin-arginine motif in their signal peptide across membranes. Together with TatC, TatB is part of a receptor directly interacting with Tat signal peptides. TatB may form an oligomeric binding site that transiently accommodates folded Tat precursor proteins before their translocation. This chain is Sec-independent protein translocase protein TatB, found in Erythrobacter litoralis (strain HTCC2594).